The following is a 353-amino-acid chain: E3 ubiquitin-protein ligase Os03g0188200 (353 aa).

Residues 48-68 form a helical membrane-spanning segment; sequence VVVLVALITAFVLLTVFSVLI. The RING-type; atypical zinc-finger motif lies at 133-175; sequence CAVCLAEFADSDELRVLPACCHVFHPDCIDPWLAAAVTCPLCR. Basic and acidic residues-rich tracts occupy residues 308–318 and 340–353; these read ADWDAGEEHGG and GSKENSDSDALNRV. A disordered region spans residues 308–353; it reads ADWDAGEEHGGSKRVHPVAGAQDETPSGSGSDGSKENSDSDALNRV.

The protein resides in the membrane. The enzyme catalyses S-ubiquitinyl-[E2 ubiquitin-conjugating enzyme]-L-cysteine + [acceptor protein]-L-lysine = [E2 ubiquitin-conjugating enzyme]-L-cysteine + N(6)-ubiquitinyl-[acceptor protein]-L-lysine.. The protein operates within protein modification; protein ubiquitination. In terms of biological role, possesses E3 ubiquitin-protein ligase in vitro. This Oryza sativa subsp. japonica (Rice) protein is E3 ubiquitin-protein ligase Os03g0188200.